The primary structure comprises 264 residues: Tryptophan synthase alpha chain (264 aa).

Catalysis depends on proton acceptor residues Glu49 and Asp60.

This sequence belongs to the TrpA family. In terms of assembly, tetramer of two alpha and two beta chains.

It catalyses the reaction (1S,2R)-1-C-(indol-3-yl)glycerol 3-phosphate + L-serine = D-glyceraldehyde 3-phosphate + L-tryptophan + H2O. It functions in the pathway amino-acid biosynthesis; L-tryptophan biosynthesis; L-tryptophan from chorismate: step 5/5. The alpha subunit is responsible for the aldol cleavage of indoleglycerol phosphate to indole and glyceraldehyde 3-phosphate. In Geotalea daltonii (strain DSM 22248 / JCM 15807 / FRC-32) (Geobacter daltonii), this protein is Tryptophan synthase alpha chain.